A 348-amino-acid chain; its full sequence is Dihydroorotase (348 aa).

The Zn(2+) site is built by His-13 and His-15. Substrate is bound by residues 15-17 (HLR) and Asn-41. Zn(2+) contacts are provided by Lys-99, His-136, and His-174. Residue Lys-99 is modified to N6-carboxylysine. His-136 is a substrate binding site. Leu-219 serves as a coordination point for substrate. Asp-247 lines the Zn(2+) pocket. Residue Asp-247 is part of the active site. His-251 and Ala-263 together coordinate substrate.

The protein belongs to the metallo-dependent hydrolases superfamily. DHOase family. Class II DHOase subfamily. In terms of assembly, homodimer. The cofactor is Zn(2+).

The enzyme catalyses (S)-dihydroorotate + H2O = N-carbamoyl-L-aspartate + H(+). It functions in the pathway pyrimidine metabolism; UMP biosynthesis via de novo pathway; (S)-dihydroorotate from bicarbonate: step 3/3. Functionally, catalyzes the reversible cyclization of carbamoyl aspartate to dihydroorotate. In Coxiella burnetii (strain RSA 331 / Henzerling II), this protein is Dihydroorotase.